Reading from the N-terminus, the 188-residue chain is MKISANSIRTGNILVYNNDLWVVSKTPEHTQPGKGGAYVQVEMKNLKTGTKRNERFSSANYLEKAELEQKDYQFLYFEGDDLVLMDTKHFDQINISKEMLEEKLSFLTENMIVKVEFYNDKPLNIELPPTVILEISETDPVIKGATATASYKPAILENGIKVKVPQYLEIGEKIVVKTDDMTYVERAK.

This sequence belongs to the elongation factor P family.

The protein localises to the cytoplasm. Its pathway is protein biosynthesis; polypeptide chain elongation. Involved in peptide bond synthesis. Stimulates efficient translation and peptide-bond synthesis on native or reconstituted 70S ribosomes in vitro. Probably functions indirectly by altering the affinity of the ribosome for aminoacyl-tRNA, thus increasing their reactivity as acceptors for peptidyl transferase. The chain is Elongation factor P from Rickettsia africae (strain ESF-5).